The sequence spans 614 residues: Autophagy-related protein 22-1 (614 aa).

Positions 1 to 29 (MQNCTNSPEDQAASVCPPPPQFPGDDTRP) are disordered. The N-linked (GlcNAc...) asparagine glycan is linked to asparagine 3. 4 helical membrane-spanning segments follow: residues 41 to 61 (YGWA…PITL), 126 to 146 (TASF…ILII), 160 to 180 (MLLV…LAVV), and 185 to 205 (LLGG…FVLL). The tract at residues 229–254 (PTGTSHDSTSTADGPGQTDGTETTSL) is disordered. Positions 230–254 (TGTSHDSTSTADGPGQTDGTETTSL) are enriched in polar residues. A run of 8 helical transmembrane segments spans residues 291–311 (GIGI…LVVV), 322–342 (LVLF…AMWL), 383–403 (ILLF…VSGT), 417–437 (AALG…AFSW), 452–472 (IVAC…GFIP), 486–506 (WEMY…SSYC), 523–545 (YALY…GIIT), and 554–574 (AFVF…LVDV).

This sequence belongs to the ATG22 family.

The protein localises to the vacuole membrane. In terms of biological role, vacuolar effluxer which mediate the efflux of amino acids resulting from autophagic degradation. The release of autophagic amino acids allows the maintenance of protein synthesis and viability during nitrogen starvation. This Aspergillus niger (strain ATCC MYA-4892 / CBS 513.88 / FGSC A1513) protein is Autophagy-related protein 22-1 (atg22-1).